The following is a 636-amino-acid chain: DNA-directed RNA polymerase III subunit RPC3 (636 aa).

The tract at residues 366 to 385 (SMQRRSQERSTHQGQSHKRL) is disordered. The interval 563–584 (LAWNIANSIHKTEILKEENFTL) is leucine-zipper.

This sequence belongs to the RNA polymerase beta chain family. As to quaternary structure, component of the RNA polymerase III (Pol III) complex consisting of 17 subunits.

The protein localises to the nucleus. DNA-dependent RNA polymerase catalyzes the transcription of DNA into RNA using the four ribonucleoside triphosphates as substrates. Specific core component of RNA polymerase III which synthesizes small RNAs, such as 5S rRNA and tRNAs. The protein is DNA-directed RNA polymerase III subunit RPC3 (RPC82) of Eremothecium gossypii (strain ATCC 10895 / CBS 109.51 / FGSC 9923 / NRRL Y-1056) (Yeast).